We begin with the raw amino-acid sequence, 561 residues long: Membrane protein insertase YidC (561 aa).

Helical transmembrane passes span 7 to 27 (ILIV…NQDY), 342 to 362 (LELT…FWLL), 368 to 388 (LLGN…GLFF), 438 to 458 (LGGC…YWVL), 469 to 489 (WMLW…PIIM), and 516 to 536 (PIIF…YWVV).

Belongs to the OXA1/ALB3/YidC family. Type 1 subfamily. As to quaternary structure, interacts with the Sec translocase complex via SecD. Specifically interacts with transmembrane segments of nascent integral membrane proteins during membrane integration.

Its subcellular location is the cell inner membrane. Its function is as follows. Required for the insertion and/or proper folding and/or complex formation of integral membrane proteins into the membrane. Involved in integration of membrane proteins that insert both dependently and independently of the Sec translocase complex, as well as at least some lipoproteins. Aids folding of multispanning membrane proteins. The chain is Membrane protein insertase YidC from Pseudomonas entomophila (strain L48).